The following is a 392-amino-acid chain: Cytochrome P450 monooxygenase ppzE (392 aa).

The helical transmembrane segment at 10-30 (LELVWFVALYPFACWTLFAVL) threads the bilayer. The N-linked (GlcNAc...) asparagine glycan is linked to asparagine 319. Residue cysteine 353 participates in heme binding. Residue asparagine 372 is glycosylated (N-linked (GlcNAc...) asparagine).

Belongs to the cytochrome P450 family. Requires heme as cofactor.

The protein resides in the membrane. The protein operates within secondary metabolite biosynthesis. In terms of biological role, cytochrome P450 monooxygenase; part of the gene cluster that mediates the biosynthesis of pyrrolopyrazines, secondary metabolites showing insecticidal activity. The role of ppzE within the pathway has still to be determined. The single multifunctional NRPS ppzA is sufficient to produce peramine via condensation of 1-pyrroline-5-carboxylate and arginine, N-methylation of the alpha-amino group of arginine and reduction of the thioester and the cyclization to form an iminium ion resulting in release from the peptide synthetase. Deprotonation of this intermediate and oxidation of the pyrroline ring would give rise to peramine. In Epichloe species that produce only peramine, the peramine synthetase gene is not localized in a gene cluster, in contrast to Metarhizium species that contain additional pyrrolopyrazine biosynthesis genes. The 2-oxoglutarate-Fe(II) type oxidoreductase ppzC hydroxylates peramine to yield the newly identified compound 8-hydroxyperamine whereas ppzD converts L-proline into trans-4-hydroxy-L-proline, a precursor of peramine biosynthesis. The sequence is that of Cytochrome P450 monooxygenase ppzE from Metarhizium rileyi (strain RCEF 4871) (Nomuraea rileyi).